A 393-amino-acid chain; its full sequence is 2,3,4,5-tetrahydropyridine-2,6-dicarboxylate N-succinyltransferase (393 aa).

The active-site Acyl-anhydride intermediate is E261. Succinyl-CoA is bound by residues R263, G278, S281, A304, D319–A320, G327, K356, and R369–S372.

This sequence belongs to the type 2 tetrahydrodipicolinate N-succinyltransferase family. Homotrimer.

Its subcellular location is the cytoplasm. It catalyses the reaction (S)-2,3,4,5-tetrahydrodipicolinate + succinyl-CoA + H2O = (S)-2-succinylamino-6-oxoheptanedioate + CoA. The protein operates within amino-acid biosynthesis; L-lysine biosynthesis via DAP pathway; LL-2,6-diaminopimelate from (S)-tetrahydrodipicolinate (succinylase route): step 1/3. Catalyzes the conversion of the cyclic tetrahydrodipicolinate (THDP) into the acyclic N-succinyl-L-2-amino-6-oxopimelate using succinyl-CoA. The sequence is that of 2,3,4,5-tetrahydropyridine-2,6-dicarboxylate N-succinyltransferase from Nitratiruptor sp. (strain SB155-2).